Consider the following 328-residue polypeptide: MSKKPVRVAVTGAAGQIGYALLFRIASGEMLGKDQPVILQLLEIPDEKAQKALKGVMMELEDCAFPLLAGMEAHGDPMTAFKDADYALLVGSRPRGPGMERAELLSINGAIFTAQGKALNAVASRNVKVLVVGNPANTNAYIAMKAAPDLPRKNFTAMLRLDHNRAASQIAAKTGKPVSSIKQLAVWGNHSPTMYADYRFATIDGASVKDMINDQVWNKDVFLPTVGKRGAAIIEARGLSSAASAANAAIDHMRDWALGTNGAWVTMGVPSNGEYGIPKDVMFGFPVTCANGEYKIVDGLAIDAFSQECINKTLAELQGEQDGVKHLI.

NAD(+) is bound at residue 12 to 18 (GAAGQIG). Substrate-binding residues include R95 and R101. Residues N108, Q115, and 132–134 (VGN) each bind NAD(+). The substrate site is built by N134 and R165. H190 acts as the Proton acceptor in catalysis.

The protein belongs to the LDH/MDH superfamily. MDH type 2 family.

The enzyme catalyses (S)-malate + NAD(+) = oxaloacetate + NADH + H(+). Functionally, catalyzes the reversible oxidation of malate to oxaloacetate. The protein is Malate dehydrogenase of Methylibium petroleiphilum (strain ATCC BAA-1232 / LMG 22953 / PM1).